An 89-amino-acid polypeptide reads, in one-letter code: Myrmicitoxin(1)-Pr2c (89 aa).

The signal sequence occupies residues 1 to 23; it reads MEIPKLLYIAVIAIGLSGSLTCA. The propeptide occupies 24 to 61; the sequence is TPLANPWADPEAEANPKAKATAEATAEAIAEALAEPEP. At Asn88 the chain carries Asparagine amide.

It belongs to the formicidae venom clade 1 family. In terms of tissue distribution, expressed by the venom gland.

It is found in the secreted. In terms of biological role, vertebrate-selective toxin that causes pain by targeting voltage-gated sodium channels. The polypeptide is Myrmicitoxin(1)-Pr2c (Pogonomyrmex rugosus (Desert harvester ant)).